The chain runs to 291 residues: D-alanyl-D-alanine carboxypeptidase (291 aa).

An N-terminal signal peptide occupies residues 1–29 (MRLRRAAATVITTGALLAAGTLGATPATA). Ser-64 functions as the Acyl-ester intermediate in the catalytic mechanism. Lys-67 serves as the catalytic Proton acceptor. Ser-125 is an active-site residue. Lys-242 contributes to the substrate binding site.

The protein belongs to the peptidase S11 family.

It is found in the secreted. The enzyme catalyses Preferential cleavage: (Ac)2-L-Lys-D-Ala-|-D-Ala. Also transpeptidation of peptidyl-alanyl moieties that are N-acyl substituents of D-alanine.. It functions in the pathway cell wall biogenesis; peptidoglycan biosynthesis. In terms of biological role, removes C-terminal D-alanyl residues from sugar-peptide cell wall precursors. This chain is D-alanyl-D-alanine carboxypeptidase, found in Streptomyces sp. (strain K15).